The chain runs to 200 residues: Phospholipase A2 inhibitor gamma subunit B (200 aa).

A signal peptide spans 1–19 (MKFLLFCCLFGTFLATGMC). 8 cysteine pairs are disulfide-bonded: Cys-22-Cys-46, Cys-25-Cys-32, Cys-39-Cys-67, Cys-73-Cys-94, Cys-95-Cys-100, Cys-120-Cys-145, Cys-138-Cys-165, and Cys-171-Cys-191.

Belongs to the CNF-like-inhibitor family. As to quaternary structure, heteromer composed of subunit A and subunit B.

The protein resides in the secreted. In terms of biological role, inhibits the enzymatic activity of the phospholipase A2 (PLA2). This is Phospholipase A2 inhibitor gamma subunit B from Elaphe climacophora (Japanese rat snake).